Reading from the N-terminus, the 359-residue chain is Protein RecA (359 aa).

74–81 contributes to the ATP binding site; sequence GPESSGKT.

This sequence belongs to the RecA family.

It is found in the cytoplasm. In terms of biological role, can catalyze the hydrolysis of ATP in the presence of single-stranded DNA, the ATP-dependent uptake of single-stranded DNA by duplex DNA, and the ATP-dependent hybridization of homologous single-stranded DNAs. It interacts with LexA causing its activation and leading to its autocatalytic cleavage. The protein is Protein RecA of Anaplasma marginale (strain St. Maries).